Here is a 395-residue protein sequence, read N- to C-terminus: Elongation factor Tu (395 aa).

Residues 10 to 204 (KEHANIGTIG…AVDDFIPTPE (195 aa)) form the tr-type G domain. The segment at 19-26 (GHVDHGKT) is G1. 19–26 (GHVDHGKT) provides a ligand contact to GTP. Residue threonine 26 participates in Mg(2+) binding. The interval 60–64 (GITIN) is G2. The segment at 81–84 (DCPG) is G3. Residues 81-85 (DCPGH) and 136-139 (NKVD) contribute to the GTP site. A G4 region spans residues 136–139 (NKVD). The G5 stretch occupies residues 174–176 (SAL).

The protein belongs to the TRAFAC class translation factor GTPase superfamily. Classic translation factor GTPase family. EF-Tu/EF-1A subfamily. In terms of assembly, monomer.

Its subcellular location is the cytoplasm. It carries out the reaction GTP + H2O = GDP + phosphate + H(+). In terms of biological role, GTP hydrolase that promotes the GTP-dependent binding of aminoacyl-tRNA to the A-site of ribosomes during protein biosynthesis. The chain is Elongation factor Tu from Staphylococcus saprophyticus subsp. saprophyticus (strain ATCC 15305 / DSM 20229 / NCIMB 8711 / NCTC 7292 / S-41).